The following is a 116-amino-acid chain: Transcription elongation factor SPT4 homolog 2 (116 aa).

The C4-type zinc finger occupies 19–39 (CLRCRLVKTYDQFRDAGCENC).

Belongs to the SPT4 family.

The protein localises to the nucleus. Functionally, may regulate transcription elongation by RNA polymerase II. May enhance transcriptional pausing at sites proximal to the promoter, which may in turn facilitate the assembly of an elongation competent RNA polymerase II complex. The chain is Transcription elongation factor SPT4 homolog 2 from Arabidopsis thaliana (Mouse-ear cress).